The sequence spans 197 residues: MARKKQVGRRLEGWKAKKWYRVYVPDAFGKAEIGDAISADPENMVGRIMTATLGEVVQDYSKSHIKMRFKINNVAGDAAYTEFVGHEVTRDYLRSMVKRRASRIDTIHPVVSKDKKLLRVTVVCLTLSRADQSQVHAVRQAISQALSARAAESDFETLVKDIVSGDMARDIFKAVKTIYPIRRVEITKSKLEQVAAV.

The protein belongs to the eukaryotic ribosomal protein eS1 family.

The protein is Small ribosomal subunit protein eS1 of Methanoculleus marisnigri (strain ATCC 35101 / DSM 1498 / JR1).